Reading from the N-terminus, the 585-residue chain is Aspartate--tRNA ligase (585 aa).

Glutamate 173 lines the L-aspartate pocket. The aspartate stretch occupies residues 197 to 200 (QTLK). Arginine 219 contributes to the L-aspartate binding site. ATP-binding positions include 219–221 (RDE) and glutamine 228. Residue histidine 446 coordinates L-aspartate. Residue glutamate 480 participates in ATP binding. Arginine 487 lines the L-aspartate pocket. Residue 532 to 535 (GLDR) participates in ATP binding.

The protein belongs to the class-II aminoacyl-tRNA synthetase family. Type 1 subfamily. As to quaternary structure, homodimer.

Its subcellular location is the cytoplasm. It catalyses the reaction tRNA(Asp) + L-aspartate + ATP = L-aspartyl-tRNA(Asp) + AMP + diphosphate. Its function is as follows. Catalyzes the attachment of L-aspartate to tRNA(Asp) in a two-step reaction: L-aspartate is first activated by ATP to form Asp-AMP and then transferred to the acceptor end of tRNA(Asp). This is Aspartate--tRNA ligase from Parabacteroides distasonis (strain ATCC 8503 / DSM 20701 / CIP 104284 / JCM 5825 / NCTC 11152).